The chain runs to 105 residues: Cuticle protein AMP4 (105 aa).

Residues 1 to 21 are disordered; sequence DRDAQTLTDERNDQGDGNFRY. Residues 16-81 form the Chitin-binding type R&amp;R domain; that stretch reads DGNFRYEFET…PSSDLLPVGP (66 aa).

As to expression, arthrodial membrane.

This chain is Cuticle protein AMP4, found in Homarus americanus (American lobster).